A 251-amino-acid chain; its full sequence is Ubiquinone/menaquinone biosynthesis C-methyltransferase UbiE (251 aa).

S-adenosyl-L-methionine is bound by residues threonine 74, aspartate 95, 123–124, and serine 140; that span reads NA.

This sequence belongs to the class I-like SAM-binding methyltransferase superfamily. MenG/UbiE family.

The enzyme catalyses a 2-demethylmenaquinol + S-adenosyl-L-methionine = a menaquinol + S-adenosyl-L-homocysteine + H(+). It carries out the reaction a 2-methoxy-6-(all-trans-polyprenyl)benzene-1,4-diol + S-adenosyl-L-methionine = a 5-methoxy-2-methyl-3-(all-trans-polyprenyl)benzene-1,4-diol + S-adenosyl-L-homocysteine + H(+). Its pathway is quinol/quinone metabolism; menaquinone biosynthesis; menaquinol from 1,4-dihydroxy-2-naphthoate: step 2/2. The protein operates within cofactor biosynthesis; ubiquinone biosynthesis. In terms of biological role, methyltransferase required for the conversion of demethylmenaquinol (DMKH2) to menaquinol (MKH2) and the conversion of 2-polyprenyl-6-methoxy-1,4-benzoquinol (DDMQH2) to 2-polyprenyl-3-methyl-6-methoxy-1,4-benzoquinol (DMQH2). The protein is Ubiquinone/menaquinone biosynthesis C-methyltransferase UbiE of Yersinia pestis bv. Antiqua (strain Antiqua).